Here is a 1962-residue protein sequence, read N- to C-terminus: RNA replication polyprotein (1962 aa).

One can recognise an Alphavirus-like MT domain in the interval 64 to 261; it reads YPNGYLPHSH…YEQKLNMEWL (198 aa). Residues 683–794 enclose the OTU domain; sequence GDEIPTPSDG…GNHFVGIETY (112 aa). The Fe2OG dioxygenase domain occupies 874–963; that stretch reads DFNCALINFY…RVSITFRKHV (90 aa). The Fe cation site is built by histidine 892, aspartate 894, and histidine 946. 2-oxoglutarate is bound at residue arginine 954. One can recognise a Peptidase C23 domain in the interval 978 to 1067; sequence YKNTCLINAF…LRNNHFSVIN (90 aa). Catalysis depends on residues cysteine 982 and histidine 1062. The (+)RNA virus helicase ATP-binding domain maps to 1122-1297; the sequence is NSFLNMTTGI…LIGGQNIEYI (176 aa). 1164–1171 contacts ATP; the sequence is GFAGSGKS. Residues 1298–1445 enclose the (+)RNA virus helicase C-terminal domain; the sequence is YSTHRMSRYF…GEKITFNRLN (148 aa). One can recognise a RdRp catalytic domain in the interval 1739–1846; sequence DICVESDYEA…LNNLAVCHDF (108 aa).

The cofactor is Fe(2+). Specific enzymatic cleavages by the viral protease yield mature proteins.

The enzyme catalyses RNA(n) + a ribonucleoside 5'-triphosphate = RNA(n+1) + diphosphate. It catalyses the reaction ATP + H2O = ADP + phosphate + H(+). Functionally, RNA replication polyprotein: RNA-directed RNA polymerase involved in viral RNA replication. Protease: Thiol protease that cleaves the polyprotein. The sequence is that of RNA replication polyprotein from Citrus (CLBV).